The chain runs to 135 residues: S-protein homolog 7 (135 aa).

Positions 1 to 20 are cleaved as a signal peptide; sequence MNNLFVLVIIIVLSAGSNNG.

Belongs to the plant self-incompatibility (S1) protein family.

The protein resides in the secreted. The protein is S-protein homolog 7 of Arabidopsis thaliana (Mouse-ear cress).